The primary structure comprises 95 residues: Large ribosomal subunit protein bL28 (95 aa).

It belongs to the bacterial ribosomal protein bL28 family.

This is Large ribosomal subunit protein bL28 from Dinoroseobacter shibae (strain DSM 16493 / NCIMB 14021 / DFL 12).